The chain runs to 520 residues: Peptide chain release factor 3 (520 aa).

The region spanning 8-277 (ESRKTFAIIS…FAPMPNARQT (270 aa)) is the tr-type G domain. GTP-binding positions include 17-24 (SHPDAGKT), 85-89 (DTPGH), and 139-142 (NKLD).

Belongs to the TRAFAC class translation factor GTPase superfamily. Classic translation factor GTPase family. PrfC subfamily.

Its subcellular location is the cytoplasm. Increases the formation of ribosomal termination complexes and stimulates activities of RF-1 and RF-2. It binds guanine nucleotides and has strong preference for UGA stop codons. It may interact directly with the ribosome. The stimulation of RF-1 and RF-2 is significantly reduced by GTP and GDP, but not by GMP. The protein is Peptide chain release factor 3 of Staphylococcus aureus (strain MRSA252).